Here is a 1225-residue protein sequence, read N- to C-terminus: Mediator of RNA polymerase II transcription subunit 13 (1225 aa).

This sequence belongs to the Mediator complex subunit 13 family. In terms of assembly, component of the srb8-11 complex which consists of rb8, srb9(TRAP240), srb10 and srb11. The srb8-11 complex associates with the Mediator complex thereby blocking association with RNA polymerase II and leading to reduced transcriptional activation by Mediator.

The protein localises to the nucleus. In terms of biological role, component of the srb8-11 complex. The srb8-11 complex is a regulatory module of the Mediator complex which is itself involved in regulation of basal and activated RNA polymerase II-dependent transcription. The srb8-11 complex may be involved in the transcriptional repression of a subset of genes regulated by Mediator. It may inhibit the association of the Mediator complex with RNA polymerase II to form the holoenzyme complex. In Schizosaccharomyces pombe (strain 972 / ATCC 24843) (Fission yeast), this protein is Mediator of RNA polymerase II transcription subunit 13 (srb9).